The following is a 161-amino-acid chain: 3-isopropylmalate dehydratase small subunit (161 aa).

It belongs to the LeuD family. LeuD type 2 subfamily. In terms of assembly, heterodimer of LeuC and LeuD.

It catalyses the reaction (2R,3S)-3-isopropylmalate = (2S)-2-isopropylmalate. It participates in amino-acid biosynthesis; L-leucine biosynthesis; L-leucine from 3-methyl-2-oxobutanoate: step 2/4. Functionally, catalyzes the isomerization between 2-isopropylmalate and 3-isopropylmalate, via the formation of 2-isopropylmaleate. This is 3-isopropylmalate dehydratase small subunit from Clostridium botulinum (strain Eklund 17B / Type B).